A 226-amino-acid polypeptide reads, in one-letter code: 2-C-methyl-D-erythritol 4-phosphate cytidylyltransferase (226 aa).

It belongs to the IspD/TarI cytidylyltransferase family. IspD subfamily.

It catalyses the reaction 2-C-methyl-D-erythritol 4-phosphate + CTP + H(+) = 4-CDP-2-C-methyl-D-erythritol + diphosphate. It participates in isoprenoid biosynthesis; isopentenyl diphosphate biosynthesis via DXP pathway; isopentenyl diphosphate from 1-deoxy-D-xylulose 5-phosphate: step 2/6. In terms of biological role, catalyzes the formation of 4-diphosphocytidyl-2-C-methyl-D-erythritol from CTP and 2-C-methyl-D-erythritol 4-phosphate (MEP). The polypeptide is 2-C-methyl-D-erythritol 4-phosphate cytidylyltransferase (Microcystis aeruginosa (strain NIES-843 / IAM M-2473)).